A 113-amino-acid polypeptide reads, in one-letter code: Large ribosomal subunit protein uL22 (113 aa).

It belongs to the universal ribosomal protein uL22 family. As to quaternary structure, part of the 50S ribosomal subunit.

This protein binds specifically to 23S rRNA; its binding is stimulated by other ribosomal proteins, e.g. L4, L17, and L20. It is important during the early stages of 50S assembly. It makes multiple contacts with different domains of the 23S rRNA in the assembled 50S subunit and ribosome. In terms of biological role, the globular domain of the protein is located near the polypeptide exit tunnel on the outside of the subunit, while an extended beta-hairpin is found that lines the wall of the exit tunnel in the center of the 70S ribosome. The protein is Large ribosomal subunit protein uL22 of Bacillus mycoides (strain KBAB4) (Bacillus weihenstephanensis).